The chain runs to 104 residues: Cell division protein FtsL (104 aa).

The Cytoplasmic segment spans residues 1 to 19 (MSTPNTHLLCLIATDLRKH). The helical transmembrane segment at 20–39 (FFAVLVGMLIVCSAIYNVYT) threads the bilayer. Over 40–104 (THKTRGLVTQ…KKNSVLVELR (65 aa)) the chain is Periplasmic.

This sequence belongs to the FtsL family. As to quaternary structure, part of a complex composed of FtsB, FtsL and FtsQ.

Its subcellular location is the cell inner membrane. Essential cell division protein. May link together the upstream cell division proteins, which are predominantly cytoplasmic, with the downstream cell division proteins, which are predominantly periplasmic. This Psychromonas ingrahamii (strain DSM 17664 / CCUG 51855 / 37) protein is Cell division protein FtsL.